The chain runs to 128 residues: Holin-like protein CidA (128 aa).

4 consecutive transmembrane segments (helical) span residues 4-24, 27-46, 59-79, and 88-108; these read LLLT…INWV, ALHI…FTLL, GAAW…VGVI, and FGVS…VSTG.

It belongs to the CidA/LrgA family. CidA subfamily.

The protein localises to the cell membrane. In terms of biological role, increases the activity of extracellular murein hydrolases possibly by mediating their export via hole formation. Inhibited by the antiholin-like proteins LrgAB. In an unstressed cell, the LrgAB products probably inhibit the function of the CidA protein. When a cell is stressed by the addition of antibiotics or by other factors in the environment, CidA possibly oligomerizes within the bacterial cell membrane, creating lesions that disrupt the proton motive force, which in turn results in loss of cell viability. These lesions are also hypothesized to regulate the subsequent cell lysis by either allowing the murein hydrolases access to the cell wall substrate and/or regulating their activity by a possible change in the cell wall pH that results from loss of membrane potential. The chain is Holin-like protein CidA from Bacillus velezensis (strain DSM 23117 / BGSC 10A6 / LMG 26770 / FZB42) (Bacillus amyloliquefaciens subsp. plantarum).